A 529-amino-acid chain; its full sequence is NADPH-dependent thioredoxin reductase 3 (529 aa).

The N-terminal 67 residues, 1–67 (MAASPKIGIG…SSDSLRLRVS (67 aa)), are a transit peptide targeting the chloroplast. Residues 54 to 78 (TRTRSSDSLRLRVSATANSPSSSSS) form a disordered region. Residues 64–78 (LRVSATANSPSSSSS) show a composition bias toward low complexity. Residues 91-94 (SGPA), 113-120 (EGYQMGGV), N133, V166, and C220 contribute to the FAD site. C217 and C220 are disulfide-bonded. T240, R265, I324, and Y344 together coordinate NADP(+). FAD-binding positions include D364 and 371-374 (RQAV). Residue R371 participates in NADP(+) binding. Residues 403–529 (PQTEEAKKEF…EYREFIEANK (127 aa)) form the Thioredoxin domain. Catalysis depends on nucleophile residues C454 and C457. C454 and C457 form a disulfide bridge.

It belongs to the class-II pyridine nucleotide-disulfide oxidoreductase family. As to quaternary structure, may homodimerize. Interacts with the 2-Cys peroxiredoxin BAS1. It depends on FAD as a cofactor.

The protein localises to the plastid. It localises to the chloroplast. The catalysed reaction is [thioredoxin]-dithiol + NADP(+) = [thioredoxin]-disulfide + NADPH + H(+). Functionally, thioredoxin reductase (TR) that exhibits both TR and thioredoxin (Trx) activities. Contains a C-terminal functional Trx domain. Functions as an electron donor for plastidial 2-Cys peroxiredoxins and participates in a NADPH-dependent hydrogen peroxide scavenging system in chloroplasts in the dark. Required for chlorophyll biosynthesis and biogenesis of the photosynthetic apparatus. Activates aerobic cyclase which converts Mg-protoporhyrin monomethyl ester into protochlorophyllide. Involved in a light-dependent regulation of starch biosynthesis by redox activation of the ADP-glucose pyrophosphorylase (AGPase), a central enzyme of starch synthesis. This chain is NADPH-dependent thioredoxin reductase 3, found in Arabidopsis thaliana (Mouse-ear cress).